The sequence spans 352 residues: Light dependent period A (352 aa).

2 4Fe-4S ferredoxin-type domains span residues 88-119 (RRAW…STGV) and 121-144 (RDRC…AQAW). Positions 97, 101, 105, 109, 124, 127, 130, and 134 each coordinate [4Fe-4S] cluster.

In terms of assembly, interacts with KaiA, CikA and SasA; the complexes do not follow circadian rhythms. Requires [4Fe-4S] cluster as cofactor.

Its function is as follows. Functions in an input pathway to the Kai circadian clock. Probably senses the metabolic state of the cell via plastoquinone levels and informs the clock to modulate the photoperiod length. Deletion decreases the ability of the bacteria to modulate the circadian period in response to altered light regimes. Mild overexpression increases the photoperiod. Rapidly degraded in the presence of the quinone analog DBMIB (2,5-dibromo-3-methyl-6-isopropyl-p-benzoquinone), an artifical electron acceptor for photosystem II that reduces the plastoquinone pool. Partially resonsible for sensitivity of CikA to DBMIB, influences the levels of KaiA. This Synechococcus elongatus (strain ATCC 33912 / PCC 7942 / FACHB-805) (Anacystis nidulans R2) protein is Light dependent period A.